Here is a 318-residue protein sequence, read N- to C-terminus: Esterase FVEG_12639 (318 aa).

Residues S156, D255, and H285 contribute to the active site.

Belongs to the AB hydrolase 3 family.

Its function is as follows. Esterase; part of the Fusarium detoxification of benzoxazolinone cluster 2 (FDB2) involved in the degradation of benzoxazolinones produced by the host plant. Maize, wheat, and rye produce the 2 benzoxazinone phytoanticipins 2,4-dihy-droxy-7-methoxy-1,4-benzoxazin-3-one (DIMBOA) and 2,4-dihydroxy-1,4-benzoxazin-3-one (DIBOA) that, due to their inherent instability once released, spontaneously degrade to the more stable corresponding benzoxazolinones, 6-methoxy-2-benzoxazolinone (MBOA) and 2-benzoxazolinone (BOA), respectively. The first step in the detoxification of benzoxazolinones involves the hydrolysis of the cyclic ester bond of benzoxazolinones by the FDB1 cluster gamma-lactamase MBL1 to aminophenols. MBL1 is able to convert BOA into 2-aminophenol (2-AP), as well as MBOA into 5-methoxy-2-aminophenol (2-AMP). The FDB2 cluster N-malonyltransferase FDB2/NAT1 then metabolizes aminophenols via N-malonylation to non-toxic malonamic acids. FDB2/NAT1 converts 2-AP into N-(2-hydroxyphenyl) malonamic acid (HPMA) and 2-AMP into N-(2-hydroxy-4-methoxyphenyl) malonamic acid (HMPMA). The duplicated dienlactone hydrolases DLH1 and DLH2 may provide redundant function for hydrolyzing the lactone moiety in the BOA molecule. The roles of the amidases an other enzymes encoded by the 2 FDB clusters have not been identified so far. The chain is Esterase FVEG_12639 from Gibberella moniliformis (strain M3125 / FGSC 7600) (Maize ear and stalk rot fungus).